The following is a 116-amino-acid chain: MVSRKAVAVLLMVHVAVMLASQTEAFVPIFTHSELQRIREKERNKGQKKSLIVQQRSEEVGPLDPVEPPEEEENEVIKLTAPVAIGTRMNSRQLEKYRAALEGLLSEVLLPARNDK.

An N-terminal signal peptide occupies residues 1-25 (MVSRKAVAVLLMVHVAVMLASQTEA). Residues 39-74 (REKERNKGQKKSLIVQQRSEEVGPLDPVEPPEEEEN) are disordered.

The protein belongs to the motilin family.

The protein resides in the secreted. Functionally, plays an important role in the regulation of interdigestive gastrointestinal motility and indirectly causes rhythmic contraction of duodenal and colonic smooth muscle. This is Promotilin (MLN) from Felis catus (Cat).